The sequence spans 406 residues: MIFSVDKVRADFPVLSREVNGLPLAYLDSAASAQKPSQVIDAEAEFYRHGYAAVHRGIHTLSAQATEKMENVRKRASLFINARSAEELVFVRGTTEGINLVANSWGNSNVRAGDNIIISQMEHHANIVPWQMLCARVGAELRVIPLNPDGTLQLETLPTLFDEKTRLLAITHVSNVLGTENPLAEMITLAHQHGAKVLVDGAQAVMHHPVDVQALDCDFYVFSGHKLYGPTGIGILYVKEALLQEMPPWEGGGSMIATVSLSEGTTWTKAPWRFEAGTPNTGGIIGLGAALEYVSALGLNNIAEYEQNLMHYALSQLESVPDLTLYGPQNRLGVIAFNLGKHHAYDVGSFLDNYGIAVRTGHHCAMPLMAYYNVPAMCRASLAMYNTHEEVDRLVTGLQRIHRLLG.

Lys226 bears the N6-(pyridoxal phosphate)lysine mark. Cys364 acts as the Cysteine persulfide intermediate in catalysis.

The protein belongs to the class-V pyridoxal-phosphate-dependent aminotransferase family. Csd subfamily. Homodimer. Interacts with SufE and the SufBCD complex composed of SufB, SufC and SufD. The interaction with SufE is required to mediate the direct transfer of the sulfur atom from the S-sulfanylcysteine. Pyridoxal 5'-phosphate serves as cofactor.

Its subcellular location is the cytoplasm. The enzyme catalyses (sulfur carrier)-H + L-cysteine = (sulfur carrier)-SH + L-alanine. It catalyses the reaction L-selenocysteine + AH2 = hydrogenselenide + L-alanine + A + H(+). Its pathway is cofactor biosynthesis; iron-sulfur cluster biosynthesis. Its function is as follows. Cysteine desulfurases mobilize the sulfur from L-cysteine to yield L-alanine, an essential step in sulfur metabolism for biosynthesis of a variety of sulfur-containing biomolecules. Component of the suf operon, which is activated and required under specific conditions such as oxidative stress and iron limitation. Acts as a potent selenocysteine lyase in vitro, that mobilizes selenium from L-selenocysteine. Selenocysteine lyase activity is however unsure in vivo. This chain is Cysteine desulfurase, found in Escherichia coli (strain K12 / MC4100 / BW2952).